We begin with the raw amino-acid sequence, 590 residues long: (-)-alpha-terpineol synthase (590 aa).

Mg(2+) is bound by residues D339, D343, D483, T487, and E491. The DDXXD motif signature appears at 339–343 (DDVYD).

It belongs to the terpene synthase family. The cofactor is Mg(2+).

The enzyme catalyses (2E)-geranyl diphosphate + H2O = (S)-alpha-terpineol + diphosphate. It functions in the pathway secondary metabolite biosynthesis; terpenoid biosynthesis. Its function is as follows. Mediates the conversion of geranyl diphosphate into alpha-terpineol, a monoterpenol. Monoterpenols contribute to the final grape and wine aroma and flavor. Also forms some 1,8-cineole and traces of other monoterpenoids. In Vitis vinifera (Grape), this protein is (-)-alpha-terpineol synthase.